Reading from the N-terminus, the 395-residue chain is Vacuolar protease A (395 aa).

The N-terminal stretch at 1–18 (MKGSLLLAGATLLGCTSA) is a signal peptide. Positions 19 to 72 (KLHSLKLKKVSLKEQLEHADIDVQIKSLGQKYMGIRPGQHEQQMFKEQTPIEAE) are cleaved as a propeptide — activation peptide. One can recognise a Peptidase A1 domain in the interval 87–392 (YFSEISIGTP…DLGKGTVGLA (306 aa)). Residue aspartate 105 is part of the active site. An intrachain disulfide couples cysteine 118 to cysteine 123. An N-linked (GlcNAc...) asparagine glycan is attached at asparagine 140. The active site involves aspartate 289. Cysteine 318 and cysteine 351 are joined by a disulfide. The N-linked (GlcNAc...) asparagine glycan is linked to asparagine 335.

It belongs to the peptidase A1 family.

It localises to the vacuole lumen. It is found in the secreted. It catalyses the reaction Hydrolysis of proteins with broad specificity for peptide bonds. Cleaves -Leu-Leu-|-Val-Tyr- bond in a synthetic substrate. Does not act on esters of Tyr or Arg.. Functionally, vacuolar aspartic endopeptidase which is probably also secreted and contributes to virulence. This is Vacuolar protease A (PEP2) from Arthroderma otae (strain ATCC MYA-4605 / CBS 113480) (Microsporum canis).